Consider the following 325-residue polypeptide: DNA-directed RNA polymerase subunit alpha (325 aa).

The interval 1-238 is alpha N-terminal domain (alpha-NTD); that stretch reads MSLKSLLKGF…EHLTVFINFE (238 aa). The segment at 254-325 is alpha C-terminal domain (alpha-CTD); sequence KLKASLSKHV…LGLSFGMRDF (72 aa).

This sequence belongs to the RNA polymerase alpha chain family. Homodimer. The RNAP catalytic core consists of 2 alpha, 1 beta, 1 beta' and 1 omega subunit. When a sigma factor is associated with the core the holoenzyme is formed, which can initiate transcription.

It carries out the reaction RNA(n) + a ribonucleoside 5'-triphosphate = RNA(n+1) + diphosphate. In terms of biological role, DNA-dependent RNA polymerase catalyzes the transcription of DNA into RNA using the four ribonucleoside triphosphates as substrates. The chain is DNA-directed RNA polymerase subunit alpha from Leptospira borgpetersenii serovar Hardjo-bovis (strain JB197).